The chain runs to 245 residues: 1-(5-phosphoribosyl)-5-[(5-phosphoribosylamino)methylideneamino] imidazole-4-carboxamide isomerase (245 aa).

Residue Asp-8 is the Proton acceptor of the active site. Asp-130 serves as the catalytic Proton donor.

The protein belongs to the HisA/HisF family.

It is found in the cytoplasm. The enzyme catalyses 1-(5-phospho-beta-D-ribosyl)-5-[(5-phospho-beta-D-ribosylamino)methylideneamino]imidazole-4-carboxamide = 5-[(5-phospho-1-deoxy-D-ribulos-1-ylimino)methylamino]-1-(5-phospho-beta-D-ribosyl)imidazole-4-carboxamide. The protein operates within amino-acid biosynthesis; L-histidine biosynthesis; L-histidine from 5-phospho-alpha-D-ribose 1-diphosphate: step 4/9. This is 1-(5-phosphoribosyl)-5-[(5-phosphoribosylamino)methylideneamino] imidazole-4-carboxamide isomerase from Pseudomonas putida (strain W619).